Here is a 56-residue protein sequence, read N- to C-terminus: UPF0291 protein Clos_1191 (56 aa).

Belongs to the UPF0291 family.

Its subcellular location is the cytoplasm. The sequence is that of UPF0291 protein Clos_1191 from Alkaliphilus oremlandii (strain OhILAs) (Clostridium oremlandii (strain OhILAs)).